Reading from the N-terminus, the 694-residue chain is Follicle-stimulating hormone receptor (694 aa).

The signal sequence occupies residues 1-17; the sequence is MALLLVSLLAFLSLGSG. Cystine bridges form between C18–C25 and C23–C32. Residues 18 to 46 enclose the LRRNT domain; the sequence is CHHRVCHCSNRVFLCQESKVTEIPSDLPR. At 18-365 the chain is on the extracellular side; that stretch reads CHHRVCHCSN…EDIMGYDILR (348 aa). LRR repeat units follow at residues 49 to 72, 73 to 97, 98 to 118, 119 to 143, 144 to 169, 170 to 192, 193 to 216, 217 to 240, and 241 to 259; these read LELRFVLTKLRVIPKGAFSGFGDL, EKIEISQNDVLEVIEANVFSNLPKL, HEIRIEKANNLLYIDHDAFQN, LPNLQYLLISNTGIKHLPAVHKIQS, LQKVLLDIQDNINIHTVERNSFMGLS, FESTILRLSKNGIQEIHNCAFNG, TQLDELNLSYNNNLEELPNDVFQG, ASGPVILDISGTRIHSLPNYGLEN, and LKKLRARSTYNLKKLPSLE. 2 N-linked (GlcNAc...) asparagine glycosylation sites follow: N191 and N199. N268 carries an N-linked (GlcNAc...) asparagine glycan. 4 disulfide bridges follow: C275/C345, C276/C292, C276/C355, and C292/C337. An N-linked (GlcNAc...) asparagine glycan is attached at N293. A Sulfotyrosine modification is found at Y334. A helical membrane pass occupies residues 366 to 386; that stretch reads VLIWFISILAITGNIIVLVIL. Residues 387–397 lie on the Cytoplasmic side of the membrane; it reads ITSQYKLTVPR. A helical membrane pass occupies residues 398–420; it reads FLMCNLAFADLCIGIYLLLIASV. Over 421-442 the chain is Extracellular; it reads DIHTKSQYHNYAIDWQTGAGCD. C441 and C516 are oxidised to a cystine. Residues 443–464 traverse the membrane as a helical segment; that stretch reads AAGFFTVFASELSVYTLTAITL. Topologically, residues 465–484 are cytoplasmic; the sequence is ERWHTITHAMQLECKVQLRH. Residues 485 to 507 traverse the membrane as a helical segment; sequence AASVMLVGWIFAFAVALLPIFGI. Residues 508–527 lie on the Extracellular side of the membrane; it reads STYMKVSICLPMDIDSPLSQ. The helical transmembrane segment at 528–549 threads the bilayer; it reads LYVMSLLVLNVLAFVVICGCYI. At 550-572 the chain is on the cytoplasmic side; it reads HIYLTVRNPNIVSSSSDTKIAKR. The chain crosses the membrane as a helical span at residues 573–596; sequence MAILIFTDFLCMAPISFFAISASL. Residues 597–607 lie on the Extracellular side of the membrane; it reads KVPLITVSKSK. Residues 608 to 629 traverse the membrane as a helical segment; the sequence is ILLVLFYPINSCANPFLYAIFT. The Cytoplasmic segment spans residues 630–694; sequence KNFRRDFFIL…LVPLSHLAQN (65 aa).

This sequence belongs to the G-protein coupled receptor 1 family. FSH/LSH/TSH subfamily. As to quaternary structure, homotrimer. Functions as a homotrimer binding the FSH hormone heterodimer composed of CGA and FSHB. Interacts with ARRB2. Interacts with APPL2; interaction is independent of follicle stimulating hormone stimulation. In terms of processing, N-glycosylated; indirectly required for FSH-binding, possibly via a conformational change that allows high affinity binding of hormone. Post-translationally, sulfated.

Its subcellular location is the cell membrane. Functionally, g protein-coupled receptor for follitropin, the follicle-stimulating hormone. Through cAMP production activates the downstream PI3K-AKT and ERK1/ERK2 signaling pathways. The chain is Follicle-stimulating hormone receptor (FSHR) from Equus caballus (Horse).